A 92-amino-acid polypeptide reads, in one-letter code: Small ribosomal subunit protein uS17 (92 aa).

Belongs to the universal ribosomal protein uS17 family. Part of the 30S ribosomal subunit.

One of the primary rRNA binding proteins, it binds specifically to the 5'-end of 16S ribosomal RNA. The polypeptide is Small ribosomal subunit protein uS17 (Mycoplasma mobile (strain ATCC 43663 / 163K / NCTC 11711) (Mesomycoplasma mobile)).